We begin with the raw amino-acid sequence, 241 residues long: Small ribosomal subunit protein uS2 (241 aa).

This sequence belongs to the universal ribosomal protein uS2 family.

The protein is Small ribosomal subunit protein uS2 of Sodalis glossinidius (strain morsitans).